Here is a 153-residue protein sequence, read N- to C-terminus: 3-hydroxyacyl-[acyl-carrier-protein] dehydratase FabZ (153 aa).

H47 is an active-site residue.

This sequence belongs to the thioester dehydratase family. FabZ subfamily.

The protein resides in the cytoplasm. The catalysed reaction is a (3R)-hydroxyacyl-[ACP] = a (2E)-enoyl-[ACP] + H2O. Its function is as follows. Involved in unsaturated fatty acids biosynthesis. Catalyzes the dehydration of short chain beta-hydroxyacyl-ACPs and long chain saturated and unsaturated beta-hydroxyacyl-ACPs. This is 3-hydroxyacyl-[acyl-carrier-protein] dehydratase FabZ from Dichelobacter nodosus (strain VCS1703A).